Consider the following 556-residue polypeptide: Putative cysteine ligase BshC (556 aa).

2 coiled-coil regions span residues 408-442 (ILQK…IAQA) and 468-513 (LGQV…ANLT).

This sequence belongs to the BshC family.

Functionally, involved in bacillithiol (BSH) biosynthesis. May catalyze the last step of the pathway, the addition of cysteine to glucosamine malate (GlcN-Mal) to generate BSH. The chain is Putative cysteine ligase BshC from Symbiobacterium thermophilum (strain DSM 24528 / JCM 14929 / IAM 14863 / T).